Reading from the N-terminus, the 127-residue chain is uncharacterized protein (127 aa).

This is an uncharacterized protein from Schizosaccharomyces pombe (strain 972 / ATCC 24843) (Fission yeast).